Here is a 93-residue protein sequence, read N- to C-terminus: DNA-directed RNA polymerase subunit omega (93 aa).

The protein belongs to the RNA polymerase subunit omega family. As to quaternary structure, the RNAP catalytic core consists of 2 alpha, 1 beta, 1 beta' and 1 omega subunit. When a sigma factor is associated with the core the holoenzyme is formed, which can initiate transcription.

It catalyses the reaction RNA(n) + a ribonucleoside 5'-triphosphate = RNA(n+1) + diphosphate. Its function is as follows. Promotes RNA polymerase assembly. Latches the N- and C-terminal regions of the beta' subunit thereby facilitating its interaction with the beta and alpha subunits. This is DNA-directed RNA polymerase subunit omega from Acinetobacter baylyi (strain ATCC 33305 / BD413 / ADP1).